Consider the following 165-residue polypeptide: uncharacterized protein (165 aa).

One can recognise an RCK C-terminal domain in the interval leucine 76–threonine 161.

This is an uncharacterized protein from Bacillus subtilis (strain 168).